Here is a 376-residue protein sequence, read N- to C-terminus: Immunoglobulin G-binding protein H (376 aa).

An N-terminal signal peptide occupies residues 1–41 (MTRQQTKKNYSLRKLKTGTASVAVALTVLGAGFANQTTVKA). Positions 69–271 (TSLENEKLKS…AAKKELEANH (203 aa)) are disordered. Composition is skewed to basic and acidic residues over residues 72-146 (ENEK…KRYQ), 156-203 (ETEK…DKQI), 211-245 (LSRD…DKQI), and 253-271 (LSRD…EANH). C repeat units lie at residues 153–187 (QQLE…EAEH), 195–229 (QKLK…EANH), and 237–271 (QKLK…EANH). D repeat units follow at residues 272 to 277 (QKLEAE), 278 to 283 (AKALKE), 286 to 291 (AKQAEE), and 293 to 298 (AKLRAG). The segment at 292-348 (LAKLRAGKASDSQTPDTKPGNKAVPGKGQAPQAGTKPNQNKAPMKETKRQLPSTGET) is disordered. An LPXTG sorting signal motif is present at residues 342 to 346 (LPSTG). The residue at position 345 (Thr-345) is a Pentaglycyl murein peptidoglycan amidated threonine. Residues 346 to 376 (GETANPFFTAAALTVMATAGVAAVVKRKEEN) constitute a propeptide, removed by sortase.

Belongs to the M protein family.

The protein localises to the secreted. It localises to the cell wall. This Streptococcus pyogenes serotype M1 protein is Immunoglobulin G-binding protein H.